A 306-amino-acid chain; its full sequence is N-acetylmuramic acid 6-phosphate etherase (306 aa).

The region spanning 55–218 (IVPRMKKGGR…STGVMIKLGK (164 aa)) is the SIS domain. The Proton donor role is filled by glutamate 83. Glutamate 114 is an active-site residue.

The protein belongs to the GCKR-like family. MurNAc-6-P etherase subfamily. As to quaternary structure, homodimer.

The enzyme catalyses N-acetyl-D-muramate 6-phosphate + H2O = N-acetyl-D-glucosamine 6-phosphate + (R)-lactate. It participates in amino-sugar metabolism; N-acetylmuramate degradation. In terms of biological role, specifically catalyzes the cleavage of the D-lactyl ether substituent of MurNAc 6-phosphate, producing GlcNAc 6-phosphate and D-lactate. The chain is N-acetylmuramic acid 6-phosphate etherase from Caldanaerobacter subterraneus subsp. tengcongensis (strain DSM 15242 / JCM 11007 / NBRC 100824 / MB4) (Thermoanaerobacter tengcongensis).